A 224-amino-acid chain; its full sequence is PKHD-type hydroxylase KPN78578_12210 (224 aa).

One can recognise a Fe2OG dioxygenase domain in the interval 77 to 176; the sequence is TISAPLFNRY…RQASFLWIQS (100 aa). Residues His-95, Asp-97, and His-157 each contribute to the Fe cation site. Arg-167 contributes to the 2-oxoglutarate binding site.

Fe(2+) serves as cofactor. Requires L-ascorbate as cofactor.

In Klebsiella pneumoniae subsp. pneumoniae (strain ATCC 700721 / MGH 78578), this protein is PKHD-type hydroxylase KPN78578_12210.